Reading from the N-terminus, the 395-residue chain is Oxalate oxidoreductase subunit alpha (395 aa).

Dimer of heterotrimer of one alpha, one beta and one delta subunit.

It carries out the reaction oxidized 2[4Fe-4S]-[ferredoxin] + oxalate = reduced 2[4Fe-4S]-[ferredoxin] + 2 CO2. Functionally, catalyzes the anaerobic oxidation of oxalate using a broad range of electron acceptors, including ferredoxin and the nickel-dependent carbon monoxide dehydrogenase. Does not require coenzyme A as cosubstrate. Enables anaerobic growth on oxalate which is used as energy source by the bacteria. The polypeptide is Oxalate oxidoreductase subunit alpha (Moorella thermoacetica (strain ATCC 39073 / JCM 9320)).